Reading from the N-terminus, the 180-residue chain is Secreted RxLR effector protein 5 (180 aa).

A signal peptide spans 1-24; sequence MRFYYTLLATAAALLVHSDALSAA. Residues 44–60 carry the RxLR-dEER motif; that stretch reads RFLRRHTDSETTDNEER.

The protein belongs to the RxLR effector family.

It localises to the secreted. The protein localises to the host cell. In terms of biological role, secreted effector that partially suppresses elicitor-induced cell death in host and enhances virulence of P.parasitica. In Phytophthora nicotianae (Potato buckeye rot agent), this protein is Secreted RxLR effector protein 5.